A 543-amino-acid chain; its full sequence is MTKSNGEEPRMGGRMERLQQGVRKRTLLAKKKVQSLTKEDVKSYLFRNAFVLLTVTAVIVGTILGFALRPYKMSYREVKYFSFPGELLMRMLQMLVLPLIISSLVTGMAALDSKASGKMGMRAVVYYMTTTIIAVVIGIIIVIIIHPGKGTKENMYREGKIVQVTAADAFLDLIRNMFPPNLVEACFKQFKTSYEKRSFKVPIQSNETLLGAVINNVSEAMETLTRIREEMVPVPGSVNGVNALGLVVFSMCFGFVIGNMKEQGQALREFFDSLNEAIMRLVAVIMWYAPLGILFLIAGKIVEMEDMGVIGGQLAMYTVTVIVGLLIHAVIVLPLLYFLVTRKNPWVFIGGLLQALITALGTSSSSATLPITFKCLEENNGVDKRITRFVLPVGATINMDGTALYEALAAIFIAQVNNFDLNFGQIITISITATAASIGAAGIPQAGLVTMVIVLTSVGLPTDDITLIIAVDWFLDRLRTTTNVLGDSLGAGIVEHLSRHELKNRDVEMGNSVIEENEMKKPYQLIAQDNEPEKPVADSETKM.

At 1–47 (MTKSNGEEPRMGGRMERLQQGVRKRTLLAKKKVQSLTKEDVKSYLFR) the chain is on the cytoplasmic side. Residues 48 to 68 (NAFVLLTVTAVIVGTILGFAL) form a helical membrane-spanning segment. Residues 69 to 86 (RPYKMSYREVKYFSFPGE) are Extracellular-facing. Residues 87–108 (LLMRMLQMLVLPLIISSLVTGM) form a helical membrane-spanning segment. Residues 109-122 (AALDSKASGKMGMR) lie on the Cytoplasmic side of the membrane. Residues 123 to 145 (AVVYYMTTTIIAVVIGIIIVIII) form a helical membrane-spanning segment. At 146 to 236 (HPGKGTKENM…IREEMVPVPG (91 aa)) the chain is on the extracellular side. N206 and N216 each carry an N-linked (GlcNAc...) asparagine glycan. Residues 237 to 260 (SVNGVNALGLVVFSMCFGFVIGNM) form a helical membrane-spanning segment. Residues 261–269 (KEQGQALRE) lie on the Cytoplasmic side of the membrane. Residues 270–297 (FFDSLNEAIMRLVAVIMWYAPLGILFLI) form a helical membrane-spanning segment. Residues 298–318 (AGKIVEMEDMGVIGGQLAMYT) lie on the Extracellular side of the membrane. Residues 319-340 (VTVIVGLLIHAVIVLPLLYFLV) form a helical membrane-spanning segment. Topologically, residues 341-345 (TRKNP) are cytoplasmic. Positions 346 to 376 (WVFIGGLLQALITALGTSSSSATLPITFKCL) form an intramembrane region, discontinuously helical. Residue 363–365 (SSS) participates in L-aspartate binding. Topologically, residues 377-385 (EENNGVDKR) are cytoplasmic. The helical transmembrane segment at 386 to 412 (ITRFVLPVGATINMDGTALYEALAAIF) threads the bilayer. Na(+) contacts are provided by G394, T396, and N398. Residue T402 participates in L-aspartate binding. The Extracellular portion of the chain corresponds to 413–425 (IAQVNNFDLNFGQ). An intramembrane region (discontinuously helical) is located at residues 426–459 (IITISITATAASIGAAGIPQAGLVTMVIVLTSVG). An L-aspartate-binding site is contributed by 443-447 (IPQAG). The Extracellular segment spans residues 460 to 472 (LPTDDITLIIAVD). Residues 473 to 494 (WFLDRLRTTTNVLGDSLGAGIV) form a helical membrane-spanning segment. Positions 476 and 483 each coordinate L-aspartate. Positions 483 and 487 each coordinate Na(+). At 495–543 (EHLSRHELKNRDVEMGNSVIEENEMKKPYQLIAQDNEPEKPVADSETKM) the chain is on the cytoplasmic side. S512 carries the phosphoserine modification. The tract at residues 522 to 543 (PYQLIAQDNEPEKPVADSETKM) is disordered. A compositionally biased stretch (basic and acidic residues) spans 531 to 543 (EPEKPVADSETKM).

It belongs to the dicarboxylate/amino acid:cation symporter (DAACS) (TC 2.A.23) family. SLC1A3 subfamily. As to quaternary structure, homotrimer. In terms of processing, glycosylated. In terms of tissue distribution, detected in brain, in Bergmann glia arborising into the molecular layer of the cerebellum (at protein level). Localized in brain and is highly enriched in the Purkinje cell layer in cerebellum. Intermediate level in lung, low level in spleen, skeletal muscle and testis.

Its subcellular location is the cell membrane. It catalyses the reaction K(+)(in) + L-glutamate(out) + 3 Na(+)(out) + H(+)(out) = K(+)(out) + L-glutamate(in) + 3 Na(+)(in) + H(+)(in). The enzyme catalyses K(+)(in) + L-aspartate(out) + 3 Na(+)(out) + H(+)(out) = K(+)(out) + L-aspartate(in) + 3 Na(+)(in) + H(+)(in). It carries out the reaction D-aspartate(out) + K(+)(in) + 3 Na(+)(out) + H(+)(out) = D-aspartate(in) + K(+)(out) + 3 Na(+)(in) + H(+)(in). Its function is as follows. Sodium-dependent, high-affinity amino acid transporter that mediates the uptake of L-glutamate and also L-aspartate and D-aspartate. Functions as a symporter that transports one amino acid molecule together with two or three Na(+) ions and one proton, in parallel with the counter-transport of one K(+) ion. Plays a redundant role in the rapid removal of released glutamate from the synaptic cleft, which is essential for terminating the postsynaptic action of glutamate. The polypeptide is Excitatory amino acid transporter 1 (Slc1a3) (Mus musculus (Mouse)).